We begin with the raw amino-acid sequence, 305 residues long: Succinate--CoA ligase [ADP-forming] subunit alpha (305 aa).

CoA is bound by residues 17 to 20 (TGKE), lysine 43, and 96 to 98 (ITE). Tyrosine 161 contributes to the substrate binding site. Histidine 249 functions as the Tele-phosphohistidine intermediate in the catalytic mechanism.

It belongs to the succinate/malate CoA ligase alpha subunit family. Heterotetramer of two alpha and two beta subunits.

It catalyses the reaction succinate + ATP + CoA = succinyl-CoA + ADP + phosphate. It carries out the reaction GTP + succinate + CoA = succinyl-CoA + GDP + phosphate. It participates in carbohydrate metabolism; tricarboxylic acid cycle; succinate from succinyl-CoA (ligase route): step 1/1. Succinyl-CoA synthetase functions in the citric acid cycle (TCA), coupling the hydrolysis of succinyl-CoA to the synthesis of either ATP or GTP and thus represents the only step of substrate-level phosphorylation in the TCA. The alpha subunit of the enzyme binds the substrates coenzyme A and phosphate, while succinate binding and nucleotide specificity is provided by the beta subunit. This Aquifex aeolicus (strain VF5) protein is Succinate--CoA ligase [ADP-forming] subunit alpha.